The chain runs to 483 residues: ATP synthase subunit beta (483 aa).

Residue 169 to 176 (GGAGVGKT) coordinates ATP.

Belongs to the ATPase alpha/beta chains family. In terms of assembly, F-type ATPases have 2 components, CF(1) - the catalytic core - and CF(0) - the membrane proton channel. CF(1) has five subunits: alpha(3), beta(3), gamma(1), delta(1), epsilon(1). CF(0) has three main subunits: a(1), b(2) and c(9-12). The alpha and beta chains form an alternating ring which encloses part of the gamma chain. CF(1) is attached to CF(0) by a central stalk formed by the gamma and epsilon chains, while a peripheral stalk is formed by the delta and b chains.

The protein localises to the cell membrane. It catalyses the reaction ATP + H2O + 4 H(+)(in) = ADP + phosphate + 5 H(+)(out). In terms of biological role, produces ATP from ADP in the presence of a proton gradient across the membrane. The catalytic sites are hosted primarily by the beta subunits. The polypeptide is ATP synthase subunit beta (Rhodococcus erythropolis (strain PR4 / NBRC 100887)).